A 448-amino-acid chain; its full sequence is Acetate kinase (448 aa).

A Mg(2+)-binding site is contributed by N7. K14 is a binding site for ATP. R91 contributes to the substrate binding site. The active-site Proton donor/acceptor is the D148. Residues 208–212 (HIGNG) and 283–285 (DRR) each bind ATP. Position 388 (E388) interacts with Mg(2+).

Belongs to the acetokinase family. Homodimer. It depends on Mg(2+) as a cofactor. Requires Mn(2+) as cofactor.

Its subcellular location is the cytoplasm. It carries out the reaction acetate + ATP = acetyl phosphate + ADP. The protein operates within metabolic intermediate biosynthesis; acetyl-CoA biosynthesis; acetyl-CoA from acetate: step 1/2. Functionally, catalyzes the formation of acetyl phosphate from acetate and ATP. Can also catalyze the reverse reaction. The protein is Acetate kinase of Treponema pallidum (strain Nichols).